The following is a 67-amino-acid chain: Large ribosomal subunit protein uL30 (67 aa).

This sequence belongs to the universal ribosomal protein uL30 family. Part of the 50S ribosomal subunit.

The chain is Large ribosomal subunit protein uL30 from Thermotoga neapolitana (strain ATCC 49049 / DSM 4359 / NBRC 107923 / NS-E).